Consider the following 299-residue polypeptide: Protoheme IX farnesyltransferase (299 aa).

Transmembrane regions (helical) follow at residues 25 to 45 (VVVLMLITSLVGMFLASRAGV), 47 to 67 (WTVLLFGNLGIGLCAGAAAAV), 95 to 115 (LAALGFALALAVAGMALLLTF), 119 to 139 (LAAWLTLASLLGYAVLYTGFL), 147 to 167 (IVIGGLAGAAPPLLGWVAVSG), 173 to 193 (PLLLVLIVFTWTPPHFWALAI), 218 to 238 (LHILLYTLALLAVTLLPYAIH), 243 to 263 (LYLLCALLLGGRFLHWAWALY), and 279 to 299 (IRYLFLLFIALLVDHYLPLTL).

The protein belongs to the UbiA prenyltransferase family. Protoheme IX farnesyltransferase subfamily.

Its subcellular location is the cell inner membrane. The enzyme catalyses heme b + (2E,6E)-farnesyl diphosphate + H2O = Fe(II)-heme o + diphosphate. Its pathway is porphyrin-containing compound metabolism; heme O biosynthesis; heme O from protoheme: step 1/1. In terms of biological role, converts heme B (protoheme IX) to heme O by substitution of the vinyl group on carbon 2 of heme B porphyrin ring with a hydroxyethyl farnesyl side group. The protein is Protoheme IX farnesyltransferase of Azotobacter vinelandii (strain DJ / ATCC BAA-1303).